Reading from the N-terminus, the 260-residue chain is NAD-capped RNA hydrolase NudC (260 aa).

Arg-69 is a binding site for substrate. Zn(2+) contacts are provided by Cys-98 and Cys-101. A substrate-binding site is contributed by Glu-111. The Zn(2+) site is built by Cys-116 and Cys-119. Position 124 (Tyr-124) interacts with substrate. The Nudix hydrolase domain maps to 125-248 (PQIAPCIIVA…TVARRLIEDT (124 aa)). Ala-158, Glu-174, and Glu-178 together coordinate a divalent metal cation. A Nudix box motif is present at residues 159–180 (GFVEVGETLEQTVVREVMEESQ). 192–199 (QPWPFPHS) lines the substrate pocket. Glu-219 contributes to the a divalent metal cation binding site. Ala-241 contributes to the substrate binding site.

This sequence belongs to the Nudix hydrolase family. NudC subfamily. As to quaternary structure, homodimer. Requires Mg(2+) as cofactor. It depends on Mn(2+) as a cofactor. Zn(2+) is required as a cofactor.

It catalyses the reaction a 5'-end NAD(+)-phospho-ribonucleoside in mRNA + H2O = a 5'-end phospho-adenosine-phospho-ribonucleoside in mRNA + beta-nicotinamide D-ribonucleotide + 2 H(+). The enzyme catalyses NAD(+) + H2O = beta-nicotinamide D-ribonucleotide + AMP + 2 H(+). It carries out the reaction NADH + H2O = reduced beta-nicotinamide D-ribonucleotide + AMP + 2 H(+). In terms of biological role, mRNA decapping enzyme that specifically removes the nicotinamide adenine dinucleotide (NAD) cap from a subset of mRNAs by hydrolyzing the diphosphate linkage to produce nicotinamide mononucleotide (NMN) and 5' monophosphate mRNA. The NAD-cap is present at the 5'-end of some mRNAs and stabilizes RNA against 5'-processing. Has preference for mRNAs with a 5'-end purine. Catalyzes the hydrolysis of a broad range of dinucleotide pyrophosphates. This Pectobacterium carotovorum subsp. carotovorum (strain PC1) protein is NAD-capped RNA hydrolase NudC.